The following is a 368-amino-acid chain: Protein RecA (368 aa).

80 to 87 is an ATP binding site; the sequence is GPESSGKT. A compositionally biased stretch (polar residues) spans 344-353; sequence NPTFTATPDS. A disordered region spans residues 344–368; sequence NPTFTATPDSENADNADDEFSEEEL. Residues 354–368 are compositionally biased toward acidic residues; the sequence is ENADNADDEFSEEEL.

Belongs to the RecA family.

The protein localises to the cytoplasm. Its function is as follows. Can catalyze the hydrolysis of ATP in the presence of single-stranded DNA, the ATP-dependent uptake of single-stranded DNA by duplex DNA, and the ATP-dependent hybridization of homologous single-stranded DNAs. It interacts with LexA causing its activation and leading to its autocatalytic cleavage. This chain is Protein RecA, found in Mannheimia haemolytica (Pasteurella haemolytica).